The primary structure comprises 688 residues: DNA ligase (688 aa).

Residues 51–55 (DSEYD), 100–101 (SL), and Glu129 contribute to the NAD(+) site. Lys131 (N6-AMP-lysine intermediate) is an active-site residue. NAD(+) contacts are provided by Arg152, Glu189, Lys308, and Lys332. Residues Cys426, Cys429, Cys444, and Cys450 each contribute to the Zn(2+) site. One can recognise a BRCT domain in the interval 609–688 (ADEQPLKGQT…DELLALLANS (80 aa)).

It belongs to the NAD-dependent DNA ligase family. LigA subfamily. The cofactor is Mg(2+). Mn(2+) is required as a cofactor.

The catalysed reaction is NAD(+) + (deoxyribonucleotide)n-3'-hydroxyl + 5'-phospho-(deoxyribonucleotide)m = (deoxyribonucleotide)n+m + AMP + beta-nicotinamide D-nucleotide.. In terms of biological role, DNA ligase that catalyzes the formation of phosphodiester linkages between 5'-phosphoryl and 3'-hydroxyl groups in double-stranded DNA using NAD as a coenzyme and as the energy source for the reaction. It is essential for DNA replication and repair of damaged DNA. The sequence is that of DNA ligase from Shewanella sp. (strain MR-4).